The chain runs to 729 residues: Triadin (729 aa).

Residues Met1 to Pro28 are disordered. The Cytoplasmic segment spans residues Met1–Pro47. A compositionally biased stretch (polar residues) spans Gly8–Val24. The helical transmembrane segment at Ala48–Phe68 threads the bilayer. Topologically, residues Asp69–Gln729 are lumenal. N-linked (GlcNAc...) asparagine glycosylation occurs at Asn75. Residues Glu117 to Asp129 are compositionally biased toward acidic residues. Disordered stretches follow at residues Glu117–Asp265, Asp281–Gln682, and Pro705–Gln729. Composition is skewed to basic and acidic residues over residues Lys130 to Asp265, Leu309 to Glu357, Ala371 to Ile433, Gly444 to Pro509, Gly516 to Lys531, Val538 to Leu562, Lys580 to Lys598, and Glu609 to Thr674. Residue Asn647 is glycosylated (N-linked (GlcNAc...) asparagine). Positions Ser715–Gln729 are enriched in polar residues.

As to quaternary structure, homooligomer of variable subunit number; disulfide-linked. Interacts with CASQ1 and RYR1 in skeletal muscle. Interacts with CASQ2. Phosphorylated by CaMK2. In terms of processing, N-glycosylated.

The protein resides in the cell membrane. The protein localises to the sarcoplasmic reticulum membrane. Its function is as follows. Contributes to the regulation of lumenal Ca2+ release via the sarcoplasmic reticulum calcium release channels RYR1 and RYR2, a key step in triggering skeletal and heart muscle contraction. Required for normal organization of the triad junction, where T-tubules and the sarcoplasmic reticulum terminal cisternae are in close contact. Required for normal skeletal muscle strength. Plays a role in excitation-contraction coupling in the heart and in regulating the rate of heart beats. The protein is Triadin (TRDN) of Homo sapiens (Human).